The sequence spans 519 residues: Putative tyrosine carboxypeptidase MATCAP2 (519 aa).

The disordered stretch occupies residues 63-103 (SKEEKKHRSQKRFSSASSKQHRKPSKSPSSSHSKDPSRMTA). His330 lines the Zn(2+) pocket. Glu331 serves as the catalytic Nucleophile. 2 residues coordinate Zn(2+): His335 and Glu366.

It depends on Zn(2+) as a cofactor.

In terms of biological role, putative tyrosine carboxypeptidase. This is Putative tyrosine carboxypeptidase MATCAP2 from Mus musculus (Mouse).